Reading from the N-terminus, the 160-residue chain is MKSLQKGFTLIELMIVVAIIGILAAFAIPAYNDYIARSQAAEGVSLADGLKVRIAENLQDGECKGPDADPASGVVGNKDTGKYALAEIDGTYDASKTAAGDPNGCKVNITYGQGTAADKISKLITGKKLVLDQLVNGSFIQGDGTDLADKFIPNAVKAKK.

The propeptide at 1–7 (MKSLQKG) is leader sequence. Position 8 is an N-methylphenylalanine (phenylalanine 8). Residues 8-28 (FTLIELMIVVAIIGILAAFAI) form a helical membrane-spanning segment.

It belongs to the N-Me-Phe pilin family. In terms of assembly, the pili are polar flexible filaments of about 5.4 nanometers diameter and 2.5 micrometers average length; they consist of only a single polypeptide chain arranged in a helical configuration of five subunits per turn in the assembled pilus.

The protein resides in the fimbrium. Its subcellular location is the membrane. The chain is Fimbrial protein (fimA) from Dichelobacter nodosus (Bacteroides nodosus).